The following is a 104-amino-acid chain: Integration host factor subunit alpha (104 aa).

Belongs to the bacterial histone-like protein family. As to quaternary structure, heterodimer of an alpha and a beta chain.

Functionally, this protein is one of the two subunits of integration host factor, a specific DNA-binding protein that functions in genetic recombination as well as in transcriptional and translational control. In Buchnera aphidicola subsp. Cinara cedri (strain Cc), this protein is Integration host factor subunit alpha.